The chain runs to 311 residues: Olfactory receptor 5L2 (311 aa).

Residues 1–25 lie on the Extracellular side of the membrane; the sequence is MGKENCTTVAEFILLGLSDVPELRV. Asn-5 is a glycosylation site (N-linked (GlcNAc...) asparagine). A helical transmembrane segment spans residues 26 to 46; that stretch reads CLFLLFLLIYGVTLLANLGMT. Topologically, residues 47–54 are cytoplasmic; the sequence is ALIQVSSR. The helical transmembrane segment at 55–75 threads the bilayer; that stretch reads LHTPVYFFLSHLSFVDFCYSS. Topologically, residues 76–99 are extracellular; that stretch reads IIVPKMLANIFNKDKAISFLGCMV. Cys-97 and Cys-189 form a disulfide bridge. The chain crosses the membrane as a helical span at residues 100–120; it reads QFYLFCTCGVTEVFLLAVMAY. Topologically, residues 121–139 are cytoplasmic; the sequence is DRFVAICNPLLYMVTMSQK. Residues 140–160 form a helical membrane-spanning segment; that stretch reads LRVELTSCCYFCGTVCSLIHS. Residues 161–196 lie on the Extracellular side of the membrane; sequence SLALRILFYRSNVINHFFCDLPPLLSLACSDVTVNE. N-linked (GlcNAc...) asparagine glycosylation occurs at Asn-195. Residues 197–217 traverse the membrane as a helical segment; sequence TLLFLVATLNESVTIMIILTS. Topologically, residues 218 to 237 are cytoplasmic; it reads YLLILTTILKIHSAESRHKA. A helical membrane pass occupies residues 238-258; it reads FSTCASHLTAITVSHGTILYI. Residues 259-271 lie on the Extracellular side of the membrane; the sequence is YCRPSSGNSGDVD. Residues 272-292 form a helical membrane-spanning segment; that stretch reads KVATVFYTVVIPMLNPLIYSL. Topologically, residues 293–311 are cytoplasmic; sequence RNKDVNKALRKVMGSKIHS.

The protein belongs to the G-protein coupled receptor 1 family.

The protein resides in the cell membrane. Functionally, odorant receptor. This chain is Olfactory receptor 5L2 (OR5L2), found in Homo sapiens (Human).